A 289-amino-acid chain; its full sequence is Proteasome assembly chaperone 1 (289 aa).

A disordered region spans residues M1–V38. The residue at position 2 (A2) is an N-acetylalanine. Position 18 is a phosphothreonine (T18). Residues Q27 to V38 show a composition bias toward basic and acidic residues. T55 carries the post-translational modification Phosphothreonine. Position 181 is a phosphoserine (S181). K265 bears the N6-acetyllysine mark.

The protein belongs to the PSMG1 family. In terms of assembly, forms a heterodimer with PSMG2. The PSMG1-PSMG2 heterodimer interacts directly with the PSMA5 and PSMA7 proteasome alpha subunits. Post-translationally, degraded by the proteasome upon completion of 20S proteasome maturation. Highly expressed in testis with moderate expression in brain, liver and kidney and low levels in heart, skeletal muscle and pancreas.

The protein localises to the cytoplasm. Its subcellular location is the endoplasmic reticulum. Chaperone protein which promotes assembly of the 20S proteasome as part of a heterodimer with PSMG2. The PSMG1-PSMG2 heterodimer binds to the PSMA5 and PSMA7 proteasome subunits, promotes assembly of the proteasome alpha subunits into the heteroheptameric alpha ring and prevents alpha ring dimerization. This Mus musculus (Mouse) protein is Proteasome assembly chaperone 1.